Reading from the N-terminus, the 318-residue chain is NADH-ubiquinone oxidoreductase chain 1 (318 aa).

The next 8 helical transmembrane spans lie at 2 to 22 (FTIN…FLTL), 70 to 90 (MFII…IPLP), 100 to 120 (LGVL…LWSG), 146 to 166 (LAII…STLI), 171 to 191 (HLWL…STLA), 222 to 242 (LFFM…TILF), 254 to 276 (LYTI…IRAS), and 294 to 314 (LPLT…TSSI).

It belongs to the complex I subunit 1 family. In terms of assembly, core subunit of respiratory chain NADH dehydrogenase (Complex I) which is composed of 45 different subunits.

It is found in the mitochondrion inner membrane. It carries out the reaction a ubiquinone + NADH + 5 H(+)(in) = a ubiquinol + NAD(+) + 4 H(+)(out). Core subunit of the mitochondrial membrane respiratory chain NADH dehydrogenase (Complex I) which catalyzes electron transfer from NADH through the respiratory chain, using ubiquinone as an electron acceptor. Essential for the catalytic activity and assembly of complex I. The protein is NADH-ubiquinone oxidoreductase chain 1 (MT-ND1) of Ceratotherium simum (White rhinoceros).